The chain runs to 699 residues: Serine/threonine-protein kinase PRR2 (699 aa).

The disordered stretch occupies residues 168-193 (SSTKKNLANDISDNKHNNNSSNTIGH). The segment covering 184-193 (NNNSSNTIGH) has biased composition (polar residues). The Protein kinase domain maps to 361–653 (RDLDVVLGEG…INGILQDGWI (293 aa)). ATP contacts are provided by residues 367 to 375 (LGEGSGGKV) and K390. Catalysis depends on D484, which acts as the Proton acceptor.

It belongs to the protein kinase superfamily. Ser/Thr protein kinase family.

It carries out the reaction L-seryl-[protein] + ATP = O-phospho-L-seryl-[protein] + ADP + H(+). The catalysed reaction is L-threonyl-[protein] + ATP = O-phospho-L-threonyl-[protein] + ADP + H(+). Functionally, protein kinase that functions as a regulator in the pheromone-induced mating pathway downstream of mitogen-activated protein kinase (MAPK) FUS3. Diminishes transcriptional induction of genes in response to pheromone signaling. This chain is Serine/threonine-protein kinase PRR2 (PRR2), found in Saccharomyces cerevisiae (strain ATCC 204508 / S288c) (Baker's yeast).